The chain runs to 236 residues: Adenosine 5'-phosphosulfate reductase 2 (236 aa).

Residues cysteine 122, cysteine 123, cysteine 205, and cysteine 208 each contribute to the [4Fe-4S] cluster site. Residues asparagine 216 to glutamate 236 form a disordered region. The active-site Nucleophile; cysteine thiosulfonate intermediate is cysteine 231.

The protein belongs to the PAPS reductase family. CysH subfamily. [4Fe-4S] cluster serves as cofactor.

It is found in the cytoplasm. The catalysed reaction is [thioredoxin]-disulfide + sulfite + AMP + 2 H(+) = adenosine 5'-phosphosulfate + [thioredoxin]-dithiol. Its pathway is sulfur metabolism; hydrogen sulfide biosynthesis; sulfite from sulfate. Catalyzes the formation of sulfite from adenosine 5'-phosphosulfate (APS) using thioredoxin as an electron donor. This is Adenosine 5'-phosphosulfate reductase 2 from Bacillus subtilis (strain 168).